The sequence spans 383 residues: Deoxyguanosinetriphosphate triphosphohydrolase-like protein (383 aa).

Positions 62 to 198 constitute an HD domain; sequence RLTHSLEVST…AALADDISYI (137 aa).

This sequence belongs to the dGTPase family. Type 2 subfamily.

This chain is Deoxyguanosinetriphosphate triphosphohydrolase-like protein, found in Rickettsia felis (strain ATCC VR-1525 / URRWXCal2) (Rickettsia azadi).